Consider the following 1185-residue polypeptide: ELMO domain-containing protein F (1185 aa).

Disordered regions lie at residues 88–133 (QPSP…GNNN), 176–196 (ISTN…NTAE), 361–409 (NNNS…VENE), 566–628 (KSTD…NTKS), 642–805 (ETER…KSSG), 819–868 (LGEK…PYII), 883–989 (DLDF…TQVT), and 1044–1114 (QKQK…KPVL). 4 stretches are compositionally biased toward low complexity: residues 94 to 127 (STIH…SSPI), 176 to 194 (ISTN…NNNT), 361 to 406 (NNNS…NNNV), and 587 to 613 (PQSQ…SSSS). The region spanning 275–488 (DRQNVLSFLN…KTRAVLSRIK (214 aa)) is the ELMO domain. A compositionally biased stretch (polar residues) spans 648 to 665 (SLTGSNGITDGGDSNPNS). A compositionally biased stretch (low complexity) spans 688–699 (SENGSSSSFSFE). Residues 721–732 (FNSLTGELTMNI) show a composition bias toward polar residues. Low complexity-rich tracts occupy residues 733–760 (SSSS…PNVS) and 767–780 (TTTT…TTTT). Over residues 781–790 (DDQSQQQVPP) the composition is skewed to polar residues. Over residues 829-841 (KVKSKKEKKKKSK) the composition is skewed to basic residues. Composition is skewed to low complexity over residues 853–864 (NNSANNSSYNNS), 912–974 (SSSN…QQPQ), 1053–1072 (DENQ…SSNE), and 1096–1109 (GRNS…SSLS).

The protein is ELMO domain-containing protein F (elmoF) of Dictyostelium discoideum (Social amoeba).